The chain runs to 1029 residues: U2 snRNP-associated SURP motif-containing protein (1029 aa).

2 disordered regions span residues 1–110 and 141–273; these read MADK…KEDE and VNAA…DPST. Ala-2 carries the N-acetylalanine modification. Residues 7–16 show a composition bias toward polar residues; sequence GGSQKASSKN. Residues 45-54 are compositionally biased toward basic residues; that stretch reads TRPKSPRKHN. Positions 55 to 64 are enriched in basic and acidic residues; the sequence is YRNESSRESL. Ser-67 carries the phosphoserine modification. Lys-80 participates in a covalent cross-link: Glycyl lysine isopeptide (Lys-Gly) (interchain with G-Cter in SUMO2). A coiled-coil region spans residues 92–121; that stretch reads AKRTLSKKEQEELKKKEDEKAAAEIYEEFL. 2 stretches are compositionally biased toward basic and acidic residues: residues 97–110 and 144–155; these read SKKE…KEDE and AKDEHETDEKRG. Glycyl lysine isopeptide (Lys-Gly) (interchain with G-Cter in SUMO2) cross-links involve residues Lys-145 and Lys-168. A compositionally biased stretch (polar residues) spans 169–178; sequence NPPNQSSNER. Positions 186–222 are enriched in basic and acidic residues; it reads ETKKPPLKKGEKEKKKSNLELFKEELKQIQEERDERH. The stretch at 192–232 forms a coiled coil; it reads LKKGEKEKKKSNLELFKEELKQIQEERDERHKTKGRLSRFE. Ser-202 carries the phosphoserine modification. Lys-208 is covalently cross-linked (Glycyl lysine isopeptide (Lys-Gly) (interchain with G-Cter in SUMO2)). Phosphoserine is present on Ser-236. Residues 239–249 show a composition bias toward basic and acidic residues; sequence DGQRRSMDVPS. The region spanning 274-355 is the RRM domain; it reads TNLYLGNINP…FEMKLGWGKA (82 aa). The stretch at 430-473 is one SURP motif repeat; it reads LIHRMIEFVVREGPMFEAMIMNREINNPMFRFLFENQTPAHVYY. Ser-485 carries the phosphoserine modification. Residues 534 to 679 form the CID domain; it reads LKEEQRDKLE…KLQNIFLGLV (146 aa). The disordered stretch occupies residues 704–729; it reads DGAPLEDVDGIPIDATPIDDLDGVPI. The residue at position 719 (Thr-719) is a Phosphothreonine. Residues Lys-748 and Lys-749 each participate in a glycyl lysine isopeptide (Lys-Gly) (interchain with G-Cter in SUMO2) cross-link. The residue at position 760 (Lys-760) is an N6-acetyllysine; alternate. Residue Lys-760 forms a Glycyl lysine isopeptide (Lys-Gly) (interchain with G-Cter in SUMO2); alternate linkage. 2 disordered regions span residues 778–841 and 855–1029; these read KWEL…EEKR and QDEL…KNKH. The span at 786-806 shows a compositional bias: acidic residues; it reads EESEEEENQNQEEESEDEEDT. Residues Ser-788, Ser-800, and Ser-811 each carry the phosphoserine modification. 2 stretches are compositionally biased toward basic and acidic residues: residues 810–841 and 874–922; these read KSEE…EEKR and QVEH…TPTR. Residues Lys-829 and Lys-832 each participate in a glycyl lysine isopeptide (Lys-Gly) (interchain with G-Cter in SUMO2) cross-link. Positions 837 to 915 form a coiled coil; the sequence is SEEKRAKLRE…ESRSKDKKEK (79 aa). Thr-931 carries the post-translational modification Phosphothreonine. Residues Ser-946 and Ser-948 each carry the phosphoserine modification. Basic and acidic residues predominate over residues 950–980; sequence KSERSERSERSHKESSRSRSSHKDSPRDASK. The segment covering 991-1029 has biased composition (basic residues); it reads TPKRSRRSRSRSPKKSGKKSRSQSRSPHRSHKKSKKNKH.

This sequence belongs to the splicing factor SR family. In terms of assembly, interacts with ERBB4.

It is found in the nucleus. The chain is U2 snRNP-associated SURP motif-containing protein (U2surp) from Mus musculus (Mouse).